The following is a 428-amino-acid chain: MPKEKPHVNIVFIGHVDHGKSTTIGRLLYDTGNIPETIIKKFEEMGEKGKSFKFAWVMDRLKEERERGITIDVAHTKFETPHRYITIIDAPGHRDFVKNMITGASQADAAVLVVAATDGVMPQTKEHAFLARTLGIKHIIVTINKMDMVNYDQKVFEKVKAQVEKLLKTLGYKDFPVIPTSAWNGDNVVKKSDKMPWYNGPTLIEALDQIPEPEKPIDKPLRIPIQDVYSIKGVGTVPVGRVETGKLKVGDVVIFEPASTIFHKPIQGEVKSIEMHHEPLQEALPGDNIGFNVRGVSKNDIKRGDVAGHTDKPPTVVRTKDTFKAQIIVLNHPTAITVGYSPVLHAHTAQIPVRFEQILAKVDPRTGNIVEENPQFIKTGDSAIVVLRPMKPVVLEPVKEIPQLGRFAIRDMGMTIAAGMVISIQKGE.

The region spanning 5-217 (KPHVNIVFIG…DQIPEPEKPI (213 aa)) is the tr-type G domain. The G1 stretch occupies residues 14–21 (GHVDHGKS). 14–21 (GHVDHGKS) provides a ligand contact to GTP. S21 contacts Mg(2+). The interval 68–72 (GITID) is G2. Positions 89-92 (DAPG) are G3. GTP is bound by residues 89–93 (DAPGH) and 144–147 (NKMD). The G4 stretch occupies residues 144 to 147 (NKMD). The tract at residues 181-183 (SAW) is G5.

It belongs to the TRAFAC class translation factor GTPase superfamily. Classic translation factor GTPase family. EF-Tu/EF-1A subfamily.

It is found in the cytoplasm. It carries out the reaction GTP + H2O = GDP + phosphate + H(+). Functionally, GTP hydrolase that promotes the GTP-dependent binding of aminoacyl-tRNA to the A-site of ribosomes during protein biosynthesis. This Pyrococcus horikoshii (strain ATCC 700860 / DSM 12428 / JCM 9974 / NBRC 100139 / OT-3) protein is Elongation factor 1-alpha.